A 1052-amino-acid polypeptide reads, in one-letter code: Fibroblast growth factor receptor homolog 2 (1052 aa).

An N-terminal signal peptide occupies residues 1 to 19 (MAKVPITLVMIIAIVSAAA). At 20 to 600 (DLGCDYGHHR…EIYALLHAHP (581 aa)) the chain is on the extracellular side. Ig-like C2-type domains are found at residues 23–117 (CDYG…IASF), 124–230 (PALP…PTQL), and 240–340 (PMLK…RTVA). A disulfide bridge links C30 with C90. 6 N-linked (GlcNAc...) asparagine glycosylation sites follow: N99, N137, N175, N181, N249, and N257. A disulfide bond links C164 and C217. C262 and C329 are joined by a disulfide. Residues 358–372 (TTTTTVASPIPTAST) are compositionally biased toward low complexity. The interval 358 to 393 (TTTTTVASPIPTASTGEDNDDDVENPAAEASGGVGP) is disordered. Ig-like C2-type domains are found at residues 393-478 (PPVF…FSVQ) and 487-585 (PIIV…RVVS). C416 and C462 are joined by a disulfide. Residues N423, N444, N494, N500, N526, N541, N546, N555, and N576 are each glycosylated (N-linked (GlcNAc...) asparagine). Cysteines 507 and 566 form a disulfide. Residues 601–626 (LGFTLAAITIVALFLLGSAFITFMLR) traverse the membrane as a helical segment. The Cytoplasmic portion of the chain corresponds to 627–1052 (RLRREKLLKL…LRYQYTYKFN (426 aa)). Residues 712–1000 (LSLGSILGEG…ELVESFDGIL (289 aa)) enclose the Protein kinase domain. ATP contacts are provided by residues 718 to 726 (LGEGAFGRV) and K748. The active-site Proton acceptor is the D864. Y895 is subject to Phosphotyrosine; by autocatalysis. Positions 1017-1038 (PMLETPPSSGDEDDGSDTETFR) are disordered.

The protein belongs to the protein kinase superfamily. Tyr protein kinase family. Fibroblast growth factor receptor subfamily. In terms of tissue distribution, during embryogenesis, expression is seen in mesoderm, endodermal precursor cells, CNS midline cells and trachea and salivary duct ectodermal cells.

It is found in the membrane. The enzyme catalyses L-tyrosyl-[protein] + ATP = O-phospho-L-tyrosyl-[protein] + ADP + H(+). In terms of biological role, may be required for patterning of muscle precursor cells: generation of mesodermal and endodermal layers, invaginations of various types of cells, and CNS formation. Essential for the ability of the migrating tracheal and midline cells to recognize external guiding cues. In Drosophila melanogaster (Fruit fly), this protein is Fibroblast growth factor receptor homolog 2 (btl).